Consider the following 1211-residue polypeptide: DNA polymerase beta (1211 aa).

A run of 4 repeats spans residues 1074 to 1077 (KPAG), 1078 to 1081 (KPAG), 1082 to 1085 (NPAG), and 1086 to 1089 (NPAG). Residues 1074 to 1089 (KPAGKPAGNPAGNPAG) are 4 X 4 AA tandem repeats of [NK]-[P]-A-G.

Belongs to the DNA polymerase type-B family.

The enzyme catalyses DNA(n) + a 2'-deoxyribonucleoside 5'-triphosphate = DNA(n+1) + diphosphate. In terms of biological role, DNA-directed DNA polymerase involved in viral DNA replication. The protein is DNA polymerase beta (DPOL) of African swine fever virus (strain Badajoz 1971 Vero-adapted) (Ba71V).